The primary structure comprises 1203 residues: MIDVNNFEYMKIGLASPDKIRSWSYGEVKKPETINYRTLKPEKDGLFCERIFGPQKDWECHCGKYKRVRYKGVVCDRCGVEVTRAKVRRERMGHIELAAPVSHIWYFKGIPSRMGLVLDMSPRALEEVIYFASYVVTESGDTPLDKKQLLSEKEYRAYRDRYGSTFQAAMGAEAIKKLLQDIDLDKEVDFLKEELKTAQGQRRTRAIKRLEVLEAFRNSGNEPSWMILDVLPVIPPELRPMVQLDGGRFATSDLNDLYRRVINRNNRLKRLLDLGAPSIIVQNEKRMLQEAVDALIDNGRRGRPVTGPGNRPLKSLSHMLKGKQGRFRQNLLGKRVDYSGRSVIVVGPNLKMYQCGLPKEMALELFKPFVMKELVEKGLAHNIKSAKRKIERVQPEVWDVLESVIKEHPVLLNRAPTLHRLGIQAFEPTLVEGRAIRLHPLVCTAYNADFDGDQMAVHVPLSSEAQAEARLLMLAAQNILNPKDGKPVVTPSQDMVLGNYYLTLEREGAIGEGMVFKDANEALLAYQNGYVHLHTRVAVAASAVNNATFTEEQKSMLLLTTVGKLIFNEILPESFPYINEPTNSNLEKETPAKYFVEKGANIKEIIASREEVAPFSKKILGNIIAEVFKRFKITETSRMLDRMKNLGFKYSTKAGITVGVSDILVLGEKDEILHEAQAKVDNVIKQFRRGLITEEERYDRVISIWSNAKDVIQGKLMKSLNKRNPIFMMSDSGARGNASNFTQLAGMRGLMANPSGRIIELPIKSSFREGLTVLEYFISTHGARKGLADTALKTADSGYLTRRLVDVAQDVIVREDDCGTDRGLLIGAIKEGNEVIESLYDRLVGRFARKTVKHPETGEVLVAENQLITEDIAHIVENSGVETVNIRSAFTCNTRHGVCKKCYGRNLATGTDVEVGEAVGIIAAQSIGEPGTQLTMRTFHTGGVAGDDITQGLPRIQEIFEARNPKGQAVISEIDGVIAAINDVKDRQEVVVQGEVEARTYAIPYGARLKVIPGQKISHGKELTEGSIDPKELLKVTDITAVQEYLLREVQKVYRMQGVEIGDKHVEVMVRQMLRKVRVSDAGETDVLPGTLLDIHQFTDANAKVLLQGKQPATARPVLLGITKASLETDSFLSAASFQETTRVLTDAAIKGKRDELLGLKENVIIGKLVPAGTGMNRYRKVDLVKTTQDDMNVENDEVYVEQ.

Residues Cys60, Cys62, Cys75, and Cys78 each contribute to the Zn(2+) site. Residues Asp449, Asp451, and Asp453 each contribute to the Mg(2+) site. Residues Cys818, Cys892, Cys899, and Cys902 each contribute to the Zn(2+) site.

This sequence belongs to the RNA polymerase beta' chain family. In terms of assembly, the RNAP catalytic core consists of 2 alpha, 1 beta, 1 beta' and 1 omega subunit. When a sigma factor is associated with the core the holoenzyme is formed, which can initiate transcription. Requires Mg(2+) as cofactor. Zn(2+) is required as a cofactor.

The enzyme catalyses RNA(n) + a ribonucleoside 5'-triphosphate = RNA(n+1) + diphosphate. DNA-dependent RNA polymerase catalyzes the transcription of DNA into RNA using the four ribonucleoside triphosphates as substrates. The protein is DNA-directed RNA polymerase subunit beta' of Bacillus cereus (strain ZK / E33L).